The chain runs to 447 residues: ATP-dependent protease ATPase subunit HslU (447 aa).

Residues Ile-18, 60–65, Asp-259, Glu-325, and Arg-397 contribute to the ATP site; that span reads GVGKTE.

The protein belongs to the ClpX chaperone family. HslU subfamily. A double ring-shaped homohexamer of HslV is capped on each side by a ring-shaped HslU homohexamer. The assembly of the HslU/HslV complex is dependent on binding of ATP.

It localises to the cytoplasm. ATPase subunit of a proteasome-like degradation complex; this subunit has chaperone activity. The binding of ATP and its subsequent hydrolysis by HslU are essential for unfolding of protein substrates subsequently hydrolyzed by HslV. HslU recognizes the N-terminal part of its protein substrates and unfolds these before they are guided to HslV for hydrolysis. The sequence is that of ATP-dependent protease ATPase subunit HslU from Burkholderia ambifaria (strain ATCC BAA-244 / DSM 16087 / CCUG 44356 / LMG 19182 / AMMD) (Burkholderia cepacia (strain AMMD)).